The following is a 125-amino-acid chain: UPF0251 protein DSY3441 (125 aa).

This sequence belongs to the UPF0251 family.

This is UPF0251 protein DSY3441 from Desulfitobacterium hafniense (strain Y51).